The chain runs to 61 residues: Small ribosomal subunit protein uS14 (61 aa).

Zn(2+) is bound by residues Cys24, Cys27, Cys40, and Cys43.

It belongs to the universal ribosomal protein uS14 family. Zinc-binding uS14 subfamily. Part of the 30S ribosomal subunit. Contacts proteins S3 and S10. It depends on Zn(2+) as a cofactor.

Functionally, binds 16S rRNA, required for the assembly of 30S particles and may also be responsible for determining the conformation of the 16S rRNA at the A site. The protein is Small ribosomal subunit protein uS14 of Mycoplasma capricolum subsp. capricolum (strain California kid / ATCC 27343 / NCTC 10154).